Reading from the N-terminus, the 154-residue chain is NADPH-dependent 7-cyano-7-deazaguanine reductase (154 aa).

Residues 1–11 (MAKKPVKDLKQ) show a composition bias toward basic and acidic residues. Residues 1-31 (MAKKPVKDLKQLGHATPVPASPEEATLERVP) form a disordered region. Cys-52 functions as the Thioimide intermediate in the catalytic mechanism. Asp-59 acts as the Proton donor in catalysis. Substrate contacts are provided by residues 74–76 (IES) and 93–94 (HE).

Belongs to the GTP cyclohydrolase I family. QueF type 1 subfamily.

Its subcellular location is the cytoplasm. It carries out the reaction 7-aminomethyl-7-carbaguanine + 2 NADP(+) = 7-cyano-7-deazaguanine + 2 NADPH + 3 H(+). The protein operates within tRNA modification; tRNA-queuosine biosynthesis. In terms of biological role, catalyzes the NADPH-dependent reduction of 7-cyano-7-deazaguanine (preQ0) to 7-aminomethyl-7-deazaguanine (preQ1). In Parvibaculum lavamentivorans (strain DS-1 / DSM 13023 / NCIMB 13966), this protein is NADPH-dependent 7-cyano-7-deazaguanine reductase.